The chain runs to 393 residues: Phosphoglycerate kinase (393 aa).

Substrate contacts are provided by residues 21–23, Arg-36, 59–62, Arg-114, and Arg-147; these read DLN and HLGR. Residues Lys-198, Glu-320, and 346 to 349 each bind ATP; that span reads GGDT.

The protein belongs to the phosphoglycerate kinase family. Monomer.

Its subcellular location is the cytoplasm. It catalyses the reaction (2R)-3-phosphoglycerate + ATP = (2R)-3-phospho-glyceroyl phosphate + ADP. Its pathway is carbohydrate degradation; glycolysis; pyruvate from D-glyceraldehyde 3-phosphate: step 2/5. The polypeptide is Phosphoglycerate kinase (Methylobacillus flagellatus (strain ATCC 51484 / DSM 6875 / VKM B-1610 / KT)).